Here is a 266-residue protein sequence, read N- to C-terminus: Mitochondrial intermembrane space import and assembly protein 40 (266 aa).

The N-terminal 28 residues, 1-28 (MFRQVSVRALRRAAGRSVCASRAQMVRH), are a transit peptide targeting the mitochondrion. Residues 29–44 (SSTLGGGKGSYNLDMP) lie on the Mitochondrial matrix side of the membrane. A helical; Signal-anchor for type II membrane protein membrane pass occupies residues 45–61 (ALALAAGVTLLAGYMVY). Topologically, residues 62–266 (PRAPKAKQAA…AESAKSDEGH (205 aa)) are mitochondrial intermembrane. Residues 87 to 98 (ASLQASAPVQAT) are compositionally biased toward polar residues. The interval 87–180 (ASLQASAPVQ…GQQGAYNPDT (94 aa)) is disordered. 2 stretches are compositionally biased toward low complexity: residues 130 to 157 (AEVGETQAEQAPAVETEQAAEAEQAAEA) and 165 to 175 (AGEAAQGQQGA). Disulfide bonds link C187/C189, C198/C231, and C208/C221. The CHCH domain maps to 195–239 (HGPCGEEFKAAFACFVYSEAEPKGIDCVEKFQVMQDCFRQHPEHY). 2 consecutive short sequence motifs (cx9C motif) follow at residues 198-208 (CGEEFKAAFAC) and 221-231 (CVEKFQVMQDC). A disordered region spans residues 242–266 (QLESEEQAVRETEAAAESAKSDEGH). Residues 248–266 (QAVRETEAAAESAKSDEGH) are compositionally biased toward basic and acidic residues.

As to quaternary structure, monomer. Cu(2+) serves as cofactor. It depends on Zn(2+) as a cofactor.

The protein localises to the mitochondrion inner membrane. Functionally, required for the import and folding of small cysteine-containing proteins (small Tim) in the mitochondrial intermembrane space (IMS). Forms a redox cycle with ERV1 that involves a disulfide relay system. Precursor proteins to be imported into the IMS are translocated in their reduced form into the mitochondria. The oxidized form of MIA40 forms a transient intermolecular disulfide bridge with the reduced precursor protein, resulting in oxidation of the precursor protein that now contains an intramolecular disulfide bond and is able to undergo folding in the IMS. In Eremothecium gossypii (strain ATCC 10895 / CBS 109.51 / FGSC 9923 / NRRL Y-1056) (Yeast), this protein is Mitochondrial intermembrane space import and assembly protein 40 (MIA40).